Consider the following 268-residue polypeptide: Nickel import ATP-binding protein NikE (268 aa).

The 249-residue stretch at 4 to 252 (LNVCGLSHHY…SSDAGRVLQN (249 aa)) folds into the ABC transporter domain. Position 45-52 (45-52 (GRSGCGKS)) interacts with ATP.

It belongs to the ABC transporter superfamily. Nickel importer (TC 3.A.1.5.3) family. The complex is composed of two ATP-binding proteins (NikD and NikE), two transmembrane proteins (NikB and NikC) and a solute-binding protein (NikA).

The protein resides in the cell inner membrane. The enzyme catalyses Ni(2+)(out) + ATP + H2O = Ni(2+)(in) + ADP + phosphate + H(+). Its function is as follows. Part of the ABC transporter complex NikABCDE involved in nickel import. Responsible for energy coupling to the transport system. This Shigella flexneri serotype 5b (strain 8401) protein is Nickel import ATP-binding protein NikE.